The following is a 284-amino-acid chain: Phosphatidylglycerol--prolipoprotein diacylglyceryl transferase (284 aa).

7 helical membrane passes run 19-39 (ISFYWYGMMYVLSFIFAMWFL), 60-80 (LLYLNFLGVVIGGRIGYVLFY), 98-118 (GGMSFHGGLIGVIISIMWFSY), 130-150 (FIVPAVPVGLGLGRLGNFING), 199-219 (QLYEMILEGIVLFVVIYIFSC), 225-245 (GSISGLFLLLYGLFRIIIEFF), and 258-278 (FITLGQVLSFPMVIFGFIIMY). R143 serves as a coordination point for a 1,2-diacyl-sn-glycero-3-phospho-(1'-sn-glycerol).

The protein belongs to the Lgt family.

The protein localises to the cell inner membrane. The enzyme catalyses L-cysteinyl-[prolipoprotein] + a 1,2-diacyl-sn-glycero-3-phospho-(1'-sn-glycerol) = an S-1,2-diacyl-sn-glyceryl-L-cysteinyl-[prolipoprotein] + sn-glycerol 1-phosphate + H(+). Its pathway is protein modification; lipoprotein biosynthesis (diacylglyceryl transfer). In terms of biological role, catalyzes the transfer of the diacylglyceryl group from phosphatidylglycerol to the sulfhydryl group of the N-terminal cysteine of a prolipoprotein, the first step in the formation of mature lipoproteins. The sequence is that of Phosphatidylglycerol--prolipoprotein diacylglyceryl transferase from Blochmanniella floridana.